A 660-amino-acid polypeptide reads, in one-letter code: Sodium/nucleoside cotransporter 2 (660 aa).

Serine 46 carries the post-translational modification Phosphoserine. 14 consecutive transmembrane segments (helical) span residues 82-102 (ILLGLLCLAYAAYFLAACILN), 106-125 (ALALFVITCLVIFILACHFL), 150-168 (KRVFVGLSVVGLILWLALD), 174-194 (EQLISFAGICMFILILFACSK), 202-222 (RTVFWGLGLQFIFGILVIRTE), 235-255 (IQIFLAYTVEGSSFVFGDTLV), 262-282 (QSLPIIIFFGCVMSILYYLGL), 297-316 (TMGTTAAETLAVAGNIFVGM), 338-357 (VMTGGFATIAGTVLGAFISF), 364-383 (LISASVMAAPCALALSKLVY), 425-445 (VAANLIAFLAVLAFINATLSW), 456-476 (SFQVICSYVLRPMVFMMGVQW), 531-551 (TTFSLCGFANLSSIGITLGGL), and 569-589 (ALFTGACVSFISACMAGILYV).

The protein belongs to the concentrative nucleoside transporter (CNT) (TC 2.A.41) family.

Its subcellular location is the membrane. It is found in the apicolateral cell membrane. It carries out the reaction adenosine(out) + Na(+)(out) = adenosine(in) + Na(+)(in). It catalyses the reaction inosine(out) + Na(+)(out) = inosine(in) + Na(+)(in). The enzyme catalyses guanosine(out) + Na(+)(out) = guanosine(in) + Na(+)(in). The catalysed reaction is uridine(out) + Na(+)(out) = uridine(in) + Na(+)(in). Sodium-dependent and purine-selective transporter. Exhibits the transport characteristics of the nucleoside transport system cif or N1 subtype (N1/cif) (selective for purine nucleosides and uridine). Plays a critical role in specific uptake and salvage of purine nucleosides in kidney and other tissues. May contribute to regulate the transport of organic compounds in testes across the blood-testis-barrier. In Mus musculus (Mouse), this protein is Sodium/nucleoside cotransporter 2 (Slc28a2).